Consider the following 38-residue polypeptide: Large ribosomal subunit protein bL36A (38 aa).

This sequence belongs to the bacterial ribosomal protein bL36 family.

The sequence is that of Large ribosomal subunit protein bL36A from Pectobacterium atrosepticum (strain SCRI 1043 / ATCC BAA-672) (Erwinia carotovora subsp. atroseptica).